The sequence spans 191 residues: Cell division protein SepF (191 aa).

The tract at residues 1 to 77 (MEGQDDYQLL…MGSNVIGLPG (77 aa)) is disordered.

Belongs to the SepF family. In terms of assembly, homodimer. Interacts with FtsZ.

The protein localises to the cytoplasm. Its function is as follows. Cell division protein that is part of the divisome complex and is recruited early to the Z-ring. Probably stimulates Z-ring formation, perhaps through the cross-linking of FtsZ protofilaments. Its function overlaps with FtsA. This is Cell division protein SepF from Synechococcus sp. (strain JA-2-3B'a(2-13)) (Cyanobacteria bacterium Yellowstone B-Prime).